A 202-amino-acid polypeptide reads, in one-letter code: Urease accessory protein UreF (202 aa).

Belongs to the UreF family. UreD, UreF and UreG form a complex that acts as a GTP-hydrolysis-dependent molecular chaperone, activating the urease apoprotein by helping to assemble the nickel containing metallocenter of UreC. The UreE protein probably delivers the nickel.

Its subcellular location is the cytoplasm. In terms of biological role, required for maturation of urease via the functional incorporation of the urease nickel metallocenter. This is Urease accessory protein UreF from Sporosarcina pasteurii (Bacillus pasteurii).